Here is a 172-residue protein sequence, read N- to C-terminus: Shikimate kinase (172 aa).

14 to 19 is an ATP binding site; the sequence is GAGKST. Ser-18 provides a ligand contact to Mg(2+). Residues Asp-36, Arg-60, and Gly-82 each contribute to the substrate site. Arg-120 is an ATP binding site. Arg-139 is a binding site for substrate. Gln-156 is a binding site for ATP.

Belongs to the shikimate kinase family. As to quaternary structure, monomer. The cofactor is Mg(2+).

Its subcellular location is the cytoplasm. It carries out the reaction shikimate + ATP = 3-phosphoshikimate + ADP + H(+). It functions in the pathway metabolic intermediate biosynthesis; chorismate biosynthesis; chorismate from D-erythrose 4-phosphate and phosphoenolpyruvate: step 5/7. In terms of biological role, catalyzes the specific phosphorylation of the 3-hydroxyl group of shikimic acid using ATP as a cosubstrate. This chain is Shikimate kinase, found in Vibrio campbellii (strain ATCC BAA-1116).